Reading from the N-terminus, the 347-residue chain is Mediator of RNA polymerase II transcription subunit 7 (347 aa).

Disordered regions lie at residues 97–172 and 302–326; these read GIER…TQTH and VPVGARTGTTVGDRRVGVDGEGAEE. Low complexity-rich tracts occupy residues 108 to 171 and 302 to 312; these read STTT…STQT and VPVGARTGTTV.

It belongs to the Mediator complex subunit 7 family. In terms of assembly, component of the Mediator complex.

Its subcellular location is the nucleus. In terms of biological role, component of the Mediator complex, a coactivator involved in the regulated transcription of nearly all RNA polymerase II-dependent genes. Mediator functions as a bridge to convey information from gene-specific regulatory proteins to the basal RNA polymerase II transcription machinery. Mediator is recruited to promoters by direct interactions with regulatory proteins and serves as a scaffold for the assembly of a functional preinitiation complex with RNA polymerase II and the general transcription factors. The polypeptide is Mediator of RNA polymerase II transcription subunit 7 (med-7) (Neurospora crassa (strain ATCC 24698 / 74-OR23-1A / CBS 708.71 / DSM 1257 / FGSC 987)).